An 847-amino-acid chain; its full sequence is Pep5-like zinc finger protein C16A10.03c (847 aa).

The CHCR repeat unit spans residues 387 to 526 (YIEAIPFSDS…GIWLFNSDPM (140 aa)). The segment at 780 to 814 (CDNCEGLLDVPFVSYSCLHLVHRDCATETVCPKCK) adopts an RING-type; atypical zinc-finger fold.

The protein resides in the cytoplasm. The protein localises to the nucleus. The chain is Pep5-like zinc finger protein C16A10.03c from Schizosaccharomyces pombe (strain 972 / ATCC 24843) (Fission yeast).